Here is a 642-residue protein sequence, read N- to C-terminus: Nocturnin (642 aa).

A disordered region spans residues 50-87 (LEDDDKPPQLFSVTDEPPSPNEEDYKPPNHHEDDGKLA). A compositionally biased stretch (basic and acidic residues) spans 72-87 (EDYKPPNHHEDDGKLA). Residue E363 participates in Mg(2+) binding. Residues E363, N430, 453 to 456 (HLKA), 491 to 493 (DFN), and H600 contribute to the substrate site. A disordered region spans residues 611-642 (PPTENGKESGSGSGSDGENETEVEGSKHGSIQ).

The protein belongs to the CCR4/nocturin family. As to quaternary structure, associates to the CCR4-NOT complex composed of at least Pop2/Caf1-55, Ccr4, Not1, Rga/Not2, and Not3. The cofactor is Mg(2+). As to expression, expressed in the head, in the dorsal neurons DN3, a subgroup of clock neurons (at protein level). Ubiquitously expressed in both males and females.

The protein resides in the cytoplasm. It catalyses the reaction NADP(+) + H2O = phosphate + NAD(+). The catalysed reaction is NADPH + H2O = phosphate + NADH. Its function is as follows. Phosphatase which catalyzes the conversion of NADP(+) to NAD(+) and of NADPH to NADH. Shows a small preference for NADPH over NADP(+). Because of its association with the CCR4-NOT complex, has a role in mRNA deadenylation and decay. Required at the pupal stage for proper wing morphogenesis after eclosion. Functionally, doesn't have a role in light-mediated behavioral response. In dorsal neurons, contributes to the light-mediated behavioral response. In Drosophila melanogaster (Fruit fly), this protein is Nocturnin.